A 203-amino-acid polypeptide reads, in one-letter code: A-type ATP synthase subunit E (203 aa).

It belongs to the V-ATPase E subunit family. As to quaternary structure, has multiple subunits with at least A(3), B(3), C, D, E, F, H, I and proteolipid K(x).

The protein localises to the cell membrane. Functionally, component of the A-type ATP synthase that produces ATP from ADP in the presence of a proton gradient across the membrane. The chain is A-type ATP synthase subunit E from Methanococcus maripaludis (strain DSM 14266 / JCM 13030 / NBRC 101832 / S2 / LL).